Consider the following 674-residue polypeptide: MVDIIVDFEIKYKDAMARVGKFKTPHGTVTTPALMPVVHPGKQTLDVKKLGAQIVITNSYIIYKNEELKKKALEEGVHSLIDFPNTIETDSGSFQLSVYGDIDITNEEVIKFQEAIKTDIGTSLDIPTAPYVKREEAENDLEITIERAKEAANVKSDLLLNSVVQGSTFPDLREKCAKEISKYDADIYPIGAVVPLMEMYRYADLVDAVMYSMRGLPENKPRHLMGAGHPMVFALATAMGCDLFDSAAYILYANKDRFMMPDGTLRLEDLIEMPCSCRVCCEYTVDELKQMDQKKRAKLIAEHNLHISFAEIRRIRQAIVDGELMKLVELRCRSHPFLLDGLRRLMEYKEDMERLNPSSKKSAFFYTGYESLARSEVPKHLKQLENIKPKNKNLVILPHTRKPYTKYVNREYIKKYTPKIPTYYSNTTNTDYSNSDVVVADIPFGIIPLGLDEFYPLAQNESPSIHDLDSKRFIRDIINNYSKKYDNVLIHRKVIEKFDITNFNLIEDELQLPEAKISDFNRLNDIADYQFGCGAGNALFGGDEDKITIEKSRKTKKIRHVFEDNENIVNMRANDGFLILSDLGAKRLHKFLEYPHNRVVVSEDSEPFALKGKSVFNKFVLDCDENIRRNDEVLIVNKDDKLLAFGKALLSSYEIKDFNTGQAIKTRKWKKEIE.

The active-site Nucleophile is Asp-90. Residues Asp-125 and Ala-192 each coordinate substrate. The Zn(2+) site is built by Cys-275, Cys-277, and Cys-280. One can recognise a PUA domain in the interval 596 to 671 (HNRVVVSEDS…QAIKTRKWKK (76 aa)).

Belongs to the archaeosine tRNA-ribosyltransferase family. Zn(2+) serves as cofactor.

The catalysed reaction is guanosine(15) in tRNA + 7-cyano-7-deazaguanine = 7-cyano-7-carbaguanosine(15) in tRNA + guanine. It functions in the pathway tRNA modification; archaeosine-tRNA biosynthesis. Its function is as follows. Exchanges the guanine residue with 7-cyano-7-deazaguanine (preQ0) at position 15 in the dihydrouridine loop (D-loop) of archaeal tRNAs. In Methanosphaera stadtmanae (strain ATCC 43021 / DSM 3091 / JCM 11832 / MCB-3), this protein is tRNA-guanine(15) transglycosylase.